The following is a 202-amino-acid chain: Small ribosomal subunit protein uS4c (202 aa).

In terms of domain architecture, S4 RNA-binding spans 90–153 (MRLDNVIFRL…KSETIISKNI (64 aa)).

The protein belongs to the universal ribosomal protein uS4 family. As to quaternary structure, part of the 30S ribosomal subunit. Contacts protein S5. The interaction surface between S4 and S5 is involved in control of translational fidelity.

It localises to the plastid. The protein localises to the chloroplast. Functionally, one of the primary rRNA binding proteins, it binds directly to 16S rRNA where it nucleates assembly of the body of the 30S subunit. With S5 and S12 plays an important role in translational accuracy. The chain is Small ribosomal subunit protein uS4c (rps4) from Hylocomium splendens (Glittering wood-moss).